We begin with the raw amino-acid sequence, 486 residues long: Aspartyl/glutamyl-tRNA(Asn/Gln) amidotransferase subunit B (486 aa).

Belongs to the GatB/GatE family. GatB subfamily. As to quaternary structure, heterotrimer of A, B and C subunits.

The enzyme catalyses L-glutamyl-tRNA(Gln) + L-glutamine + ATP + H2O = L-glutaminyl-tRNA(Gln) + L-glutamate + ADP + phosphate + H(+). It carries out the reaction L-aspartyl-tRNA(Asn) + L-glutamine + ATP + H2O = L-asparaginyl-tRNA(Asn) + L-glutamate + ADP + phosphate + 2 H(+). Its function is as follows. Allows the formation of correctly charged Asn-tRNA(Asn) or Gln-tRNA(Gln) through the transamidation of misacylated Asp-tRNA(Asn) or Glu-tRNA(Gln) in organisms which lack either or both of asparaginyl-tRNA or glutaminyl-tRNA synthetases. The reaction takes place in the presence of glutamine and ATP through an activated phospho-Asp-tRNA(Asn) or phospho-Glu-tRNA(Gln). The sequence is that of Aspartyl/glutamyl-tRNA(Asn/Gln) amidotransferase subunit B from Azoarcus sp. (strain BH72).